Here is a 531-residue protein sequence, read N- to C-terminus: Ribosomal protein uS12 methylthiotransferase RimO (531 aa).

Polar residues-rich tracts occupy residues 1 to 19 and 55 to 67; these read MPNI…SQPA and HNQN…SSEV. The disordered stretch occupies residues 1 to 77; sequence MPNISTESVN…VSAASAKTTT (77 aa). The span at 68–77 shows a compositional bias: low complexity; the sequence is VSAASAKTTT. Residues 88 to 198 enclose the MTTase N-terminal domain; sequence PKIGFVSLGC…VIRAVALHVP (111 aa). Residues Cys97, Cys133, Cys162, Cys236, Cys240, and Cys243 each coordinate [4Fe-4S] cluster. The 238-residue stretch at 222–459 folds into the Radical SAM core domain; the sequence is LTPSHYAYLK…MTLQQDISAQ (238 aa). A TRAM domain is found at 462 to 531; sequence QEKIGKTLMV…EYDLFASYKG (70 aa).

This sequence belongs to the methylthiotransferase family. RimO subfamily. Requires [4Fe-4S] cluster as cofactor.

It is found in the cytoplasm. It carries out the reaction L-aspartate(89)-[ribosomal protein uS12]-hydrogen + (sulfur carrier)-SH + AH2 + 2 S-adenosyl-L-methionine = 3-methylsulfanyl-L-aspartate(89)-[ribosomal protein uS12]-hydrogen + (sulfur carrier)-H + 5'-deoxyadenosine + L-methionine + A + S-adenosyl-L-homocysteine + 2 H(+). Catalyzes the methylthiolation of an aspartic acid residue of ribosomal protein uS12. The protein is Ribosomal protein uS12 methylthiotransferase RimO of Psychrobacter cryohalolentis (strain ATCC BAA-1226 / DSM 17306 / VKM B-2378 / K5).